An 872-amino-acid polypeptide reads, in one-letter code: Alanine--tRNA ligase (872 aa).

His567, His571, Cys669, and His673 together coordinate Zn(2+).

This sequence belongs to the class-II aminoacyl-tRNA synthetase family. Zn(2+) serves as cofactor.

The protein resides in the cytoplasm. It catalyses the reaction tRNA(Ala) + L-alanine + ATP = L-alanyl-tRNA(Ala) + AMP + diphosphate. Functionally, catalyzes the attachment of alanine to tRNA(Ala) in a two-step reaction: alanine is first activated by ATP to form Ala-AMP and then transferred to the acceptor end of tRNA(Ala). Also edits incorrectly charged Ser-tRNA(Ala) and Gly-tRNA(Ala) via its editing domain. The chain is Alanine--tRNA ligase from Streptococcus agalactiae serotype Ia (strain ATCC 27591 / A909 / CDC SS700).